Here is a 547-residue protein sequence, read N- to C-terminus: Chaperonin GroEL (547 aa).

ATP is bound by residues 30–33, Lys51, 87–91, Gly415, and Asp495; these read TLGP and DGTTT. The segment at 526–547 is disordered; the sequence is QDATPTASPDMGGMGGMGGGMM. The segment covering 537–547 has biased composition (gly residues); it reads GGMGGMGGGMM.

The protein belongs to the chaperonin (HSP60) family. As to quaternary structure, forms a cylinder of 14 subunits composed of two heptameric rings stacked back-to-back. Interacts with the co-chaperonin GroES.

The protein localises to the cytoplasm. The enzyme catalyses ATP + H2O + a folded polypeptide = ADP + phosphate + an unfolded polypeptide.. Functionally, together with its co-chaperonin GroES, plays an essential role in assisting protein folding. The GroEL-GroES system forms a nano-cage that allows encapsulation of the non-native substrate proteins and provides a physical environment optimized to promote and accelerate protein folding. This chain is Chaperonin GroEL, found in Vesicomyosocius okutanii subsp. Calyptogena okutanii (strain HA).